The primary structure comprises 317 residues: Ventral anterior homeobox 1 (317 aa).

Positions M1 to D62 are disordered. The span at G18 to D27 shows a compositional bias: basic and acidic residues. Positions P92–Q151 form a DNA-binding region, homeobox. Positions G203 to G248 are disordered. Low complexity predominate over residues G212 to S225. A compositionally biased stretch (polar residues) spans T236–Q247.

This sequence belongs to the EMX homeobox family. Expressed in the anterior neural keel and later in the preoptic area and optic stalk.

It localises to the nucleus. In terms of biological role, transcription factor that is required for closure of the choroid fissure and together with Vax2 is required for optic nerve differentiation and to limit retinal development to the optic cup. The chain is Ventral anterior homeobox 1 (vax1) from Danio rerio (Zebrafish).